We begin with the raw amino-acid sequence, 347 residues long: Large ribosomal subunit protein uL10 (347 aa).

The tract at residues 310–347 (ATVAAPAAEEEKKEEEPEEEEEDHAEEDGMAGLGALFG) is disordered. Residues 325–338 (EPEEEEEDHAEEDG) show a composition bias toward acidic residues.

The protein belongs to the universal ribosomal protein uL10 family. Part of the 50S ribosomal subunit. Forms part of the ribosomal stalk which helps the ribosome interact with GTP-bound translation factors. Forms a heptameric L10(L12)2(L12)2(L12)2 complex, where L10 forms an elongated spine to which the L12 dimers bind in a sequential fashion.

Its function is as follows. Forms part of the ribosomal stalk, playing a central role in the interaction of the ribosome with GTP-bound translation factors. The polypeptide is Large ribosomal subunit protein uL10 (Methanosarcina mazei (strain ATCC BAA-159 / DSM 3647 / Goe1 / Go1 / JCM 11833 / OCM 88) (Methanosarcina frisia)).